The sequence spans 228 residues: 2-C-methyl-D-erythritol 4-phosphate cytidylyltransferase (228 aa).

Belongs to the IspD/TarI cytidylyltransferase family. IspD subfamily.

It catalyses the reaction 2-C-methyl-D-erythritol 4-phosphate + CTP + H(+) = 4-CDP-2-C-methyl-D-erythritol + diphosphate. It participates in isoprenoid biosynthesis; isopentenyl diphosphate biosynthesis via DXP pathway; isopentenyl diphosphate from 1-deoxy-D-xylulose 5-phosphate: step 2/6. Functionally, catalyzes the formation of 4-diphosphocytidyl-2-C-methyl-D-erythritol from CTP and 2-C-methyl-D-erythritol 4-phosphate (MEP). The polypeptide is 2-C-methyl-D-erythritol 4-phosphate cytidylyltransferase (Actinobacillus pleuropneumoniae serotype 5b (strain L20)).